Consider the following 776-residue polypeptide: MASLIYRQLLTNSYTVDLSDEIQEIGSTKTQNVTINLGPFAQTGYAPVNWGPGETNDSTTVEPVLDGPYQPTSFNPPVDYWMLLAPTAAGVVVEGTNNTDRWLATILVEPNVTSETRSYTLFGTQEQITIANASQTQWKFIDVVKTTQNGSYSQYGPLQSTPKLYAVMKHNGKIYTYNGETPNVTTKYYSTTNYDSVNMTAFCDFYIIPREEESTCTEYINNGLPPIQNTRNIVPLALSARNIISHRAQANEDIVVSKTSLWKEMQYNRDITIRFKFASSIVKSGGLGYKWSEISFKPANYQYTYTRDGEDVTAHTTCSVNGMNDFNFNGGSLPTDFIISRYEVIKENSYVYVDYWDDSQAFRNMVYVRSLAANLNSVICTGGDYSFALPVGQWPVMTGGAVSLHSAGVTLSTQFTDFVSFNSLRFRFRLTVEEPSFSITRTRVGGLYGLPAAYPNNGKEYYEVAGRLSLISLVPSNDDYQTPITNSVTVRQDLERQLGELREEFNALSQEIAMSQLIYLALLPLDMFSMFSGIKSTIDAAKSMATSVMKKFKKSGLANSVSTLTDSLSDAASSISRGASIRSVGSSASAWTDVSTQITDVSSSVSSISTQTSTISRRLRLKEMATQTEGMNFDDISAAVLKTKIDRSTQISPNTLPDIVTEASEKFIPNRAYRVINNDEVFEAGTDGRYFAYRVETFDEIPFDVQKFADLVTDSPVISAIIDFKTLKNLNDNYGISRQQAFNLLRSDPRVLREFINQDNPIIRNRIEQLIMQCRL.

Residues 65-224 (LDGPYQPTSF…TCTEYINNGL (160 aa)) are spike head. An intrachain disulfide couples cysteine 203 to cysteine 216. The interval 248 to 479 (AQANEDIVVS…LISLVPSNDD (232 aa)) is spike body and stalk (antigen domain). Residues 308-310 (DGE) carry the DGE motif; interaction with ITGA2/ITGB1 heterodimer motif. An intrachain disulfide couples cysteine 318 to cysteine 380. Residues 389 to 409 (LPVGQWPVMTGGAVSLHSAGV) form a hydrophobic; possible role in virus entry into host cell region. The YGL motif; interaction with ITGA4 motif lies at 448 to 450 (YGL). A coiled-coil region spans residues 484-511 (ITNSVTVRQDLERQLGELREEFNALSQE). The spike foot stretch occupies residues 510–776 (QEIAMSQLIY…IEQLIMQCRL (267 aa)). The KID motif; interaction with HSPA8 motif lies at 644–646 (KID).

The protein belongs to the rotavirus VP4 family. In terms of assembly, homotrimer. VP4 adopts a dimeric appearance above the capsid surface, while forming a trimeric base anchored inside the capsid layer. Only hints of the third molecule are observed above the capsid surface. It probably performs a series of molecular rearrangements during viral entry. Prior to trypsin cleavage, it is flexible. The priming trypsin cleavage triggers its rearrangement into rigid spikes with approximate two-fold symmetry of their protruding parts. After an unknown second triggering event, cleaved VP4 may undergo another rearrangement, in which two VP5* subunits fold back on themselves and join a third subunit to form a tightly associated trimer, shaped like a folded umbrella. Interacts with VP6. Interacts with VP7. Homotrimer. The trimer is coiled-coil stabilized by its C-terminus, however, its N-terminus, known as antigen domain or 'body', seems to be flexible allowing it to self-associate either as a dimer or a trimer. Interacts with host ITGA2 (via ITAG2 I-domain); this interaction occurs when ITGA2 is part of the integrin heterodimer ITGA2/ITGB1. Interacts with host integrin heterodimer ITGA4/ITGB1 and ITGA4/ITGB7. Interacts with host HSPA8/HSP70. In terms of processing, proteolytic cleavage by trypsin results in activation of VP4 functions and greatly increases infectivity. The penetration into the host cell is dependent on trypsin treatment of VP4. It produces two peptides, VP5* and VP8* that remain associated with the virion. Cleavage of VP4 by trypsin occurs in vivo in the lumen of the intestine prior to infection of enterocytes.

The protein resides in the virion. The protein localises to the host rough endoplasmic reticulum. It is found in the host cell membrane. Its subcellular location is the host cytoplasm. It localises to the host cytoskeleton. The protein resides in the host endoplasmic reticulum-Golgi intermediate compartment. In terms of biological role, spike-forming protein that mediates virion attachment to the host epithelial cell receptors and plays a major role in cell penetration, determination of host range restriction and virulence. Rotavirus attachment and entry into the host cell probably involves multiple sequential contacts between the outer capsid proteins VP4 and VP7, and the cell receptors. It is subsequently lost, together with VP7, following virus entry into the host cell. Following entry into the host cell, low intracellular or intravesicular Ca(2+) concentration probably causes the calcium-stabilized VP7 trimers to dissociate from the virion. This step is probably necessary for the membrane-disrupting entry step and the release of VP4, which is locked onto the virion by VP7. During the virus exit from the host cell, VP4 seems to be required to target the newly formed virions to the host cell lipid rafts. Its function is as follows. Forms the spike 'foot' and 'body' and acts as a membrane permeabilization protein that mediates release of viral particles from endosomal compartments into the cytoplasm. During entry, the part of VP5* that protrudes from the virus folds back on itself and reorganizes from a local dimer to a trimer. This reorganization may be linked to membrane penetration by exposing VP5* hydrophobic region. In integrin-dependent strains, VP5* targets the integrin heterodimer ITGA2/ITGB1 for cell attachment. Forms the head of the spikes and mediates the recognition of specific host cell surface glycans. It is the viral hemagglutinin and an important target of neutralizing antibodies. In sialic acid-dependent strains, VP8* binds to host cell sialic acid, most probably a ganglioside, providing the initial contact. In some other strains, VP8* mediates the attachment to histo-blood group antigens (HBGAs) for viral entry. This Rotavirus A (strain RVA/Monkey/United States/RRV/1975/G3P5B[3]) (RV-A) protein is Outer capsid protein VP4.